We begin with the raw amino-acid sequence, 220 residues long: MTDILDEVLSDQNEEKRLIFFKKLVPIIIIISIVVITIMVIIKNNKDNRIKNNQKNGDILVKTIGLDTTKDNKALAFNTLENLITSSNTKIKEIAALEQVAIRMSEKKYLGAKNLLNKIIDNEKYSEISTAYARIAWCCIVLDDQSLNIQDKGKLQKYLNYFDDEKKPFWATATIIKAILDIKHNMKTQAEKNLKNLLASNNVSDLLKDQAKALLVSLSK.

Residues 20–42 traverse the membrane as a helical segment; it reads FFKKLVPIIIIISIVVITIMVII.

It is found in the membrane. This is an uncharacterized protein from Rickettsia prowazekii (strain Madrid E).